Here is a 230-residue protein sequence, read N- to C-terminus: Uracil-DNA glycosylase (230 aa).

Asp-70 (proton acceptor) is an active-site residue.

This sequence belongs to the uracil-DNA glycosylase (UDG) superfamily. UNG family.

The protein localises to the cytoplasm. The catalysed reaction is Hydrolyzes single-stranded DNA or mismatched double-stranded DNA and polynucleotides, releasing free uracil.. In terms of biological role, excises uracil residues from the DNA which can arise as a result of misincorporation of dUMP residues by DNA polymerase or due to deamination of cytosine. This is Uracil-DNA glycosylase from Pseudomonas syringae pv. syringae (strain B728a).